Here is a 364-residue protein sequence, read N- to C-terminus: Developmentally-regulated GTP-binding protein 2 (364 aa).

Position 21 is a (3S)-3-hydroxylysine (Lys21). An OBG-type G domain is found at 63–288 (ARVALIGFPS…LLEMLWEYLA (226 aa)). GTP is bound by residues 69–76 (GFPSVGKS), 94–98 (FTTLT), 115–118 (DLPG), 246–249 (NKID), and 269–271 (SCG). Mg(2+) contacts are provided by Ser76 and Thr96. A TGS domain is found at 288-363 (ALTCIYTKKR…EHEDVIQIVK (76 aa)).

It belongs to the TRAFAC class OBG-HflX-like GTPase superfamily. OBG GTPase family. Interacts with RWDD1; this interaction confers protection to polyubiquitination and proteolytic degradation. Interacts with JMJD7; this interaction is direct. Mg(2+) is required as a cofactor. Hydroxylated (with S stereochemistry) at C-3 of Lys-21 by JMJD7; this modification hinders trypsin-catalyzed proteolysis in vitro. Post-translationally, polyubiquitinated. As to expression, highest levels in skeletal muscle, heart and kidney. Low levels in colon, thymus, spleen, small intestine, lung and Leukocytes.

The protein resides in the nucleus. The protein localises to the cytoplasm. The catalysed reaction is GTP + H2O = GDP + phosphate + H(+). Catalyzes the conversion of GTP to GDP through hydrolysis of the gamma-phosphate bond in GTP. When hydroxylated at C-3 of 'Lys-21' by JMJD7, may bind to RNA and play a role in translation. The protein is Developmentally-regulated GTP-binding protein 2 of Homo sapiens (Human).